Reading from the N-terminus, the 741-residue chain is Type VI secretion system spike protein VgrG1b (741 aa).

Composition is skewed to polar residues over residues 614–629 (SIGA…NETI) and 649–663 (GNQS…SRSV). The disordered stretch occupies residues 614–678 (SIGANRSESV…TSVGKDDSLD (65 aa)).

Belongs to the VgrG protein family.

It is found in the secreted. Part of the H1 type VI secretion system (H1-T6SS) specialized secretion system, which delivers several virulence factors in both prokaryotic and eukaryotic cells during infection. Allows the delivery of the Tse7 toxin to target cells where it exerts toxicity through its nuclease domain. The chain is Type VI secretion system spike protein VgrG1b from Pseudomonas aeruginosa (strain ATCC 15692 / DSM 22644 / CIP 104116 / JCM 14847 / LMG 12228 / 1C / PRS 101 / PAO1).